We begin with the raw amino-acid sequence, 340 residues long: Delta(1)-pyrroline-2-carboxylate reductase 1 (340 aa).

The active-site Charge relay system is the Ser50. Residue His51 is the Proton donor of the active site. Arg55 lines the substrate pocket. 123-127 (HFSAL) provides a ligand contact to NADP(+). Thr163 serves as a coordination point for substrate. Residue 181–183 (DFA) coordinates NADP(+). 189–190 (RG) is a substrate binding site. Asp191 functions as the Charge relay system in the catalytic mechanism. Residues 232-233 (HK) and 307-313 (RLPSQRR) each bind NADP(+).

Belongs to the LDH2/MDH2 oxidoreductase family. In terms of assembly, homodimer.

The catalysed reaction is L-proline + NAD(+) = 1-pyrroline-2-carboxylate + NADH + H(+). It catalyses the reaction L-proline + NADP(+) = 1-pyrroline-2-carboxylate + NADPH + H(+). In terms of biological role, catalyzes the reduction of Delta(1)-pyrroline-2-carboxylate (Pyr2C) to L-proline, using NADPH as the electron donor. May be involved in a degradation pathway that converts trans-3-hydroxy-L-proline (t3LHyp) to L-proline. This chain is Delta(1)-pyrroline-2-carboxylate reductase 1, found in Burkholderia ambifaria (strain ATCC BAA-244 / DSM 16087 / CCUG 44356 / LMG 19182 / AMMD) (Burkholderia cepacia (strain AMMD)).